A 238-amino-acid polypeptide reads, in one-letter code: Succinate dehydrogenase assembly factor 2, mitochondrial (238 aa).

Residues 47–82 (GLKADGSRADQAEAGASQSLDKQSRTLDSVRDDTLS) form a disordered region. Basic and acidic residues predominate over residues 68-80 (KQSRTLDSVRDDT).

Belongs to the SDHAF2 family. In terms of assembly, interacts with the flavoprotein subunit within the SDH catalytic dimer.

Its subcellular location is the mitochondrion matrix. Functionally, plays an essential role in the assembly of succinate dehydrogenase (SDH), an enzyme complex (also referred to as respiratory complex II) that is a component of both the tricarboxylic acid (TCA) cycle and the mitochondrial electron transport chain, and which couples the oxidation of succinate to fumarate with the reduction of ubiquinone (coenzyme Q) to ubiquinol. Required for flavinylation (covalent attachment of FAD) of the flavoprotein subunit of the SDH catalytic dimer. This is Succinate dehydrogenase assembly factor 2, mitochondrial from Mycosarcoma maydis (Corn smut fungus).